Here is a 74-residue protein sequence, read N- to C-terminus: UPF0235 protein tsr1994 (74 aa).

It belongs to the UPF0235 family.

This is UPF0235 protein tsr1994 from Thermosynechococcus vestitus (strain NIES-2133 / IAM M-273 / BP-1).